The chain runs to 324 residues: D-alanine--D-alanine ligase (324 aa).

One can recognise an ATP-grasp domain in the interval 121–321 (NQYLKAFGVR…IKDVMTDIIE (201 aa)). ATP is bound at residue 149–204 (VEKIGLPCFIKPNLGGSSFGVTKVKTREQIQPAIAKAFSEAEEVMIEAFMGGTELT). 3 residues coordinate Mg(2+): Asp275, Glu288, and Asn290.

This sequence belongs to the D-alanine--D-alanine ligase family. It depends on Mg(2+) as a cofactor. Mn(2+) is required as a cofactor.

The protein resides in the cytoplasm. It carries out the reaction 2 D-alanine + ATP = D-alanyl-D-alanine + ADP + phosphate + H(+). It functions in the pathway cell wall biogenesis; peptidoglycan biosynthesis. In terms of biological role, cell wall formation. The sequence is that of D-alanine--D-alanine ligase from Bacteroides fragilis (strain YCH46).